We begin with the raw amino-acid sequence, 262 residues long: MNDILAKILAVKAEEVATARQMRSEAELLREAQARQDVRGFAQAIEDKISQGKAGVIAEIKKASPSKGVLRENFDPAEIAASYAMHGAACLSVLTDVQFFQGSHDNLRRARAACSLPVLRKDFIIDPYQIISARAMGADCVLLIVAALAPAQLRDLETLAIDLGMDVLVEVHDAKELDAALALRTPLIGINNRNLRTFETTLQTTLDLLPMIPAGKRVVTESGILKPEDVRLMREHDVQAFLVGEAFMRANDPGVELARLVA.

This sequence belongs to the TrpC family.

It catalyses the reaction 1-(2-carboxyphenylamino)-1-deoxy-D-ribulose 5-phosphate + H(+) = (1S,2R)-1-C-(indol-3-yl)glycerol 3-phosphate + CO2 + H2O. It functions in the pathway amino-acid biosynthesis; L-tryptophan biosynthesis; L-tryptophan from chorismate: step 4/5. In Bordetella bronchiseptica (strain ATCC BAA-588 / NCTC 13252 / RB50) (Alcaligenes bronchisepticus), this protein is Indole-3-glycerol phosphate synthase.